Consider the following 492-residue polypeptide: Ribose import ATP-binding protein RbsA (492 aa).

ABC transporter domains are found at residues 3–239 (IEMK…VGRS) and 249–492 (AEIR…TGGQ). 35 to 42 (GENGAGKS) is an ATP binding site.

This sequence belongs to the ABC transporter superfamily. Ribose importer (TC 3.A.1.2.1) family. The complex is composed of an ATP-binding protein (RbsA), two transmembrane proteins (RbsC) and a solute-binding protein (RbsB).

Its subcellular location is the cell membrane. It carries out the reaction D-ribose(out) + ATP + H2O = D-ribose(in) + ADP + phosphate + H(+). Its function is as follows. Part of the ABC transporter complex RbsABC involved in ribose import. Responsible for energy coupling to the transport system. In Lactococcus lactis subsp. lactis (strain IL1403) (Streptococcus lactis), this protein is Ribose import ATP-binding protein RbsA.